Here is a 192-residue protein sequence, read N- to C-terminus: uncharacterized protein (192 aa).

Positions 29 to 160 constitute a Nudix hydrolase domain; it reads HRQAAVLIPI…PLDIYRRGDS (132 aa). The Nudix box motif lies at 67-89; it reads GAVDDTDASVIAAALREAEEEVA. Mg(2+) is bound by residues Glu83 and Glu87.

This sequence belongs to the Nudix hydrolase family. PCD1 subfamily. It depends on Mn(2+) as a cofactor. Requires Mg(2+) as cofactor.

In terms of biological role, probably mediates the hydrolysis of some nucleoside diphosphate derivatives. This is an uncharacterized protein from Shigella flexneri.